Here is a 688-residue protein sequence, read N- to C-terminus: Sciellin (688 aa).

Residues 1–25 are compositionally biased toward polar residues; that stretch reads MSNVTLRKMSPTGNEMKSTTQGTTR. A disordered region spans residues 1–29; that stretch reads MSNVTLRKMSPTGNEMKSTTQGTTRKQQD. N6-acetyllysine is present on Lys83. The disordered stretch occupies residues 134–231; sequence QPGGSLNANT…TNRSAERNIR (98 aa). A compositionally biased stretch (low complexity) spans 140–154; the sequence is NANTSNTIASTSATT. Over residues 186–195 the composition is skewed to pro residues; the sequence is VHPPIPPKPS. 16 tandem repeats follow at residues 251 to 266, 267 to 286, 287 to 306, 307 to 326, 327 to 346, 347 to 366, 367 to 386, 387 to 406, 407 to 426, 427 to 446, 447 to 465, 466 to 484, 485 to 504, 505 to 523, 524 to 543, and 544 to 563. Residues 251 to 563 form a 16 X approximate tandem repeats region; that stretch reads GEELDNLIKM…NSHVSENKNG (313 aa). Ser289 is subject to Phosphoserine. Residues 340-373 form a disordered region; the sequence is MNKTSRRSEDLDNATEVNPKGHENTTGKKDLDGL. The segment covering 358 to 373 has biased composition (basic and acidic residues); the sequence is PKGHENTTGKKDLDGL. Phosphoserine is present on Ser389. The 67-residue stretch at 619–685 folds into the LIM zinc-binding domain; the sequence is DMCTYCRKPL…EPCYSKIMAK (67 aa).

Highly expressed in esophagus. It is also expressed in keratinocytes, amniotic tissue, foreskin stratum spinosum and stratum granulosum, hair follicle and nail.

It is found in the cytoplasm. It localises to the membrane. Its function is as follows. May function in the assembly or regulation of proteins in the cornified envelope. The LIM domain may be involved in homotypic or heterotypic associations and may function to localize sciellin to the cornified envelope. This is Sciellin (SCEL) from Homo sapiens (Human).